Here is a 179-residue protein sequence, read N- to C-terminus: Large ribosomal subunit protein bL17 (179 aa).

Residues 127 to 179 (TDTLPDTVIDTGPDSAPDPVPGSEPGSAAGDLPDADTAPADPGESSSNQRVIR) are disordered. Low complexity predominate over residues 154–168 (AAGDLPDADTAPADP). Residues 170-179 (ESSSNQRVIR) show a composition bias toward polar residues.

This sequence belongs to the bacterial ribosomal protein bL17 family. Part of the 50S ribosomal subunit. Contacts protein L32.

The protein is Large ribosomal subunit protein bL17 of Tropheryma whipplei (strain TW08/27) (Whipple's bacillus).